The following is a 393-amino-acid chain: S-adenosylmethionine synthase (393 aa).

His16 contacts ATP. Asp18 lines the Mg(2+) pocket. Residue Glu44 participates in K(+) binding. Residues Glu57 and Gln100 each coordinate L-methionine. Positions 100-110 (QSNDIAQGVDH) are flexible loop. Residues 167–169 (DAK), 238–239 (RF), Asp247, 253–254 (RK), Ala270, and Lys274 contribute to the ATP site. An L-methionine-binding site is contributed by Asp247. Residue Lys278 participates in L-methionine binding.

This sequence belongs to the AdoMet synthase family. As to quaternary structure, homotetramer; dimer of dimers. Requires Mg(2+) as cofactor. K(+) is required as a cofactor.

Its subcellular location is the cytoplasm. It carries out the reaction L-methionine + ATP + H2O = S-adenosyl-L-methionine + phosphate + diphosphate. The protein operates within amino-acid biosynthesis; S-adenosyl-L-methionine biosynthesis; S-adenosyl-L-methionine from L-methionine: step 1/1. Catalyzes the formation of S-adenosylmethionine (AdoMet) from methionine and ATP. The overall synthetic reaction is composed of two sequential steps, AdoMet formation and the subsequent tripolyphosphate hydrolysis which occurs prior to release of AdoMet from the enzyme. This chain is S-adenosylmethionine synthase, found in Variovorax paradoxus (strain S110).